Consider the following 412-residue polypeptide: Serine hydroxymethyltransferase (412 aa).

(6S)-5,6,7,8-tetrahydrofolate contacts are provided by residues L120 and 124–126; that span reads GHL. N6-(pyridoxal phosphate)lysine is present on K229. (6S)-5,6,7,8-tetrahydrofolate is bound at residue 352–354; that stretch reads SPF.

This sequence belongs to the SHMT family. Homodimer. Requires pyridoxal 5'-phosphate as cofactor.

It is found in the cytoplasm. The catalysed reaction is (6R)-5,10-methylene-5,6,7,8-tetrahydrofolate + glycine + H2O = (6S)-5,6,7,8-tetrahydrofolate + L-serine. It functions in the pathway one-carbon metabolism; tetrahydrofolate interconversion. The protein operates within amino-acid biosynthesis; glycine biosynthesis; glycine from L-serine: step 1/1. Functionally, catalyzes the reversible interconversion of serine and glycine with tetrahydrofolate (THF) serving as the one-carbon carrier. This reaction serves as the major source of one-carbon groups required for the biosynthesis of purines, thymidylate, methionine, and other important biomolecules. Also exhibits THF-independent aldolase activity toward beta-hydroxyamino acids, producing glycine and aldehydes, via a retro-aldol mechanism. This Ruminiclostridium cellulolyticum (strain ATCC 35319 / DSM 5812 / JCM 6584 / H10) (Clostridium cellulolyticum) protein is Serine hydroxymethyltransferase.